The primary structure comprises 508 residues: Adenylosuccinate synthetase 1, chloroplastic (508 aa).

A chloroplast-targeting transit peptide spans 1-56 (MNISILRLDSNPITTATSPATATANHRSGILGCYNGTYSCRLNQLQQRKKNPSIIV). GTP contacts are provided by residues 95–101 (GDEGKGK) and 123–125 (GHT). Asp-96 serves as the catalytic Proton acceptor. Positions 96 and 123 each coordinate Mg(2+). Residues 96–99 (DEGK), 121–124 (NAGH), Thr-213, Arg-227, Gln-307, Thr-322, and Arg-386 contribute to the IMP site. His-124 functions as the Proton donor in the catalytic mechanism. 382–388 (TTTGRPR) contacts substrate. Residues Arg-388, 414–416 (KLD), and 497–499 (GIG) contribute to the GTP site.

The protein belongs to the adenylosuccinate synthetase family. In terms of assembly, homodimer. It depends on Mg(2+) as a cofactor.

It localises to the plastid. It is found in the chloroplast. The catalysed reaction is IMP + L-aspartate + GTP = N(6)-(1,2-dicarboxyethyl)-AMP + GDP + phosphate + 2 H(+). Its pathway is purine metabolism; AMP biosynthesis via de novo pathway; AMP from IMP: step 1/2. Functionally, plays an important role in the de novo pathway and in the salvage pathway of purine nucleotide biosynthesis. Catalyzes the first committed step in the biosynthesis of AMP from IMP. In Capsicum frutescens (Cayenne pepper), this protein is Adenylosuccinate synthetase 1, chloroplastic.